The sequence spans 113 residues: Large ribosomal subunit protein bL17 (113 aa).

Belongs to the bacterial ribosomal protein bL17 family. Part of the 50S ribosomal subunit. Contacts protein L32.

This is Large ribosomal subunit protein bL17 from Clostridioides difficile (strain 630) (Peptoclostridium difficile).